The chain runs to 196 residues: dCTP deaminase (196 aa).

DCTP contacts are provided by residues 113–118 (RSSLAR), Asp-131, 139–141 (VLE), Tyr-174, Lys-181, and Gln-185. Glu-141 (proton donor/acceptor) is an active-site residue.

Belongs to the dCTP deaminase family. In terms of assembly, homotrimer.

It catalyses the reaction dCTP + H2O + H(+) = dUTP + NH4(+). Its pathway is pyrimidine metabolism; dUMP biosynthesis; dUMP from dCTP (dUTP route): step 1/2. In terms of biological role, catalyzes the deamination of dCTP to dUTP. This chain is dCTP deaminase, found in Wigglesworthia glossinidia brevipalpis.